Consider the following 107-residue polypeptide: U1-lycotoxin-Ls1e (107 aa).

An N-terminal signal peptide occupies residues 1–20; that stretch reads MMKVLVVVALLVTLISYSSS. A propeptide spanning residues 21-41 is cleaved from the precursor; that stretch reads EGIDDLEADELLSLMANEQTR. Intrachain disulfides connect C44/C59, C51/C68, C58/C86, and C70/C84.

It belongs to the neurotoxin 19 (CSTX) family. 04 (U1-Lctx) subfamily. In terms of tissue distribution, expressed by the venom gland.

It localises to the secreted. The protein is U1-lycotoxin-Ls1e of Lycosa singoriensis (Wolf spider).